Reading from the N-terminus, the 282-residue chain is Shikimate dehydrogenase (NADP(+)) (282 aa).

Shikimate-binding positions include 15–17 and Thr62; that span reads SKS. The active-site Proton acceptor is the Lys66. Shikimate is bound by residues Asn87 and Asp103. NADP(+) contacts are provided by residues 127–131, 151–156, and Met220; these read GAGGA and NRTHTK. Residue Tyr222 coordinates shikimate. Gly244 provides a ligand contact to NADP(+).

The protein belongs to the shikimate dehydrogenase family. Homodimer.

The enzyme catalyses shikimate + NADP(+) = 3-dehydroshikimate + NADPH + H(+). The protein operates within metabolic intermediate biosynthesis; chorismate biosynthesis; chorismate from D-erythrose 4-phosphate and phosphoenolpyruvate: step 4/7. Its function is as follows. Involved in the biosynthesis of the chorismate, which leads to the biosynthesis of aromatic amino acids. Catalyzes the reversible NADPH linked reduction of 3-dehydroshikimate (DHSA) to yield shikimate (SA). In Shewanella baltica (strain OS155 / ATCC BAA-1091), this protein is Shikimate dehydrogenase (NADP(+)).